The sequence spans 205 residues: Auxin-responsive protein IAA8 (205 aa).

The tract at residues 1–48 is disordered; the sequence is MECMASTEESLPASSSMDSCSGELPTTTTTAPAQSTASSGCRPPATAA. Residues 7–19 show a composition bias toward polar residues; that stretch reads TEESLPASSSMDS. Residues 25–39 show a composition bias toward low complexity; it reads PTTTTTAPAQSTASS. The EAR-like (transcriptional repression) motif lies at 58–62; the sequence is LRLGL. The segment at 71–98 is disordered; the sequence is DGNNPSTPRSSLTTATVTADRGGGGGGH. Polar residues predominate over residues 73-87; it reads NNPSTPRSSLTTATV. The PB1 domain maps to 103–199; it reads SLFVKVYMEG…KRLRIARADD (97 aa).

This sequence belongs to the Aux/IAA family. As to quaternary structure, homodimers and heterodimers. Highly expressed in green shoots. Expressed in flowers.

It localises to the nucleus. Its function is as follows. Aux/IAA proteins are short-lived transcriptional factors that function as repressors of early auxin response genes at low auxin concentrations. This chain is Auxin-responsive protein IAA8 (IAA8), found in Oryza sativa subsp. japonica (Rice).